A 438-amino-acid chain; its full sequence is MESLYQQFSHVLNTYYQPQTKVVVAFSGGVDSRLLLELLRRYREENSLSCHAVYVHHGLSENADIWADKCQVWAKQAGISCSVERVNLDTNSGESIELLAREARYEALARHINRGDLLLTGQHADDQVETFLLALKRGSGPKGLSSMAESMPFAGGTLVRPLLNTKREQIEATAKNIGLEWVEDESNQDTRYDRNFLRHRIVPELSERWPSIHQAVQRSASLCAQQEALLDELLGSVFARALQADLSLSIDELAIHSELAQARLIRMWLSKLNANMPSQTQLRLIWQEVALAQQDANPKLKLKQGEIRRFQNKLYWVTHRADVTSWQGHIQIDEPLILPESLGTLTLSSGSHQPNISLPSHPELLRVTFNPEGLSAHPTTRSRSRKLKKLFQEYNVPSWLRRQIPILMYKDQVVAVADLFVDQTFSGQDCELIWRKPL.

27–32 (SGGVDS) serves as a coordination point for ATP.

The protein belongs to the tRNA(Ile)-lysidine synthase family.

It is found in the cytoplasm. It carries out the reaction cytidine(34) in tRNA(Ile2) + L-lysine + ATP = lysidine(34) in tRNA(Ile2) + AMP + diphosphate + H(+). Functionally, ligates lysine onto the cytidine present at position 34 of the AUA codon-specific tRNA(Ile) that contains the anticodon CAU, in an ATP-dependent manner. Cytidine is converted to lysidine, thus changing the amino acid specificity of the tRNA from methionine to isoleucine. This Vibrio parahaemolyticus serotype O3:K6 (strain RIMD 2210633) protein is tRNA(Ile)-lysidine synthase.